Here is a 229-residue protein sequence, read N- to C-terminus: Demethylmenaquinone methyltransferase (229 aa).

S-adenosyl-L-methionine is bound by residues T57, D77, and 101-102; that span reads DV.

It belongs to the class I-like SAM-binding methyltransferase superfamily. MenG/UbiE family.

The enzyme catalyses a 2-demethylmenaquinol + S-adenosyl-L-methionine = a menaquinol + S-adenosyl-L-homocysteine + H(+). The protein operates within quinol/quinone metabolism; menaquinone biosynthesis; menaquinol from 1,4-dihydroxy-2-naphthoate: step 2/2. Methyltransferase required for the conversion of demethylmenaquinol (DMKH2) to menaquinol (MKH2). The chain is Demethylmenaquinone methyltransferase from Chlamydia trachomatis serovar L2 (strain ATCC VR-902B / DSM 19102 / 434/Bu).